Consider the following 505-residue polypeptide: DNA primase DnaG (505 aa).

The Toprim domain maps to aspartate 167 to proline 241. Mg(2+) is bound by residues glutamate 173, aspartate 215, and aspartate 217. Residues aspartate 268–glutamate 410 are disordered. The segment covering alanine 318–serine 327 has biased composition (low complexity). Composition is skewed to acidic residues over residues glycine 349 to phenylalanine 376 and proline 384 to leucine 402.

Belongs to the archaeal DnaG primase family. Forms a ternary complex with MCM helicase and DNA. Mg(2+) serves as cofactor.

The enzyme catalyses ssDNA + n NTP = ssDNA/pppN(pN)n-1 hybrid + (n-1) diphosphate.. Functionally, RNA polymerase that catalyzes the synthesis of short RNA molecules used as primers for DNA polymerase during DNA replication. The polypeptide is DNA primase DnaG (Halorubrum lacusprofundi (strain ATCC 49239 / DSM 5036 / JCM 8891 / ACAM 34)).